Consider the following 347-residue polypeptide: N-acetyl-gamma-glutamyl-phosphate reductase (347 aa).

Cysteine 151 is an active-site residue.

Belongs to the NAGSA dehydrogenase family. Type 1 subfamily.

It localises to the cytoplasm. It catalyses the reaction N-acetyl-L-glutamate 5-semialdehyde + phosphate + NADP(+) = N-acetyl-L-glutamyl 5-phosphate + NADPH + H(+). The protein operates within amino-acid biosynthesis; L-arginine biosynthesis; N(2)-acetyl-L-ornithine from L-glutamate: step 3/4. Functionally, catalyzes the NADPH-dependent reduction of N-acetyl-5-glutamyl phosphate to yield N-acetyl-L-glutamate 5-semialdehyde. This is N-acetyl-gamma-glutamyl-phosphate reductase from Corynebacterium aurimucosum (strain ATCC 700975 / DSM 44827 / CIP 107346 / CN-1) (Corynebacterium nigricans).